A 418-amino-acid polypeptide reads, in one-letter code: Putative competence-damage inducible protein (418 aa).

It belongs to the CinA family.

This Streptococcus pneumoniae serotype 2 (strain D39 / NCTC 7466) protein is Putative competence-damage inducible protein.